The following is a 436-amino-acid chain: 3-ketoacyl-CoA thiolase (436 aa).

The Acyl-thioester intermediate role is filled by cysteine 99. Catalysis depends on proton acceptor residues histidine 392 and cysteine 422.

This sequence belongs to the thiolase-like superfamily. Thiolase family. As to quaternary structure, heterotetramer of two alpha chains (FadJ) and two beta chains (FadI).

It is found in the cytoplasm. The catalysed reaction is an acyl-CoA + acetyl-CoA = a 3-oxoacyl-CoA + CoA. It participates in lipid metabolism; fatty acid beta-oxidation. In terms of biological role, catalyzes the final step of fatty acid oxidation in which acetyl-CoA is released and the CoA ester of a fatty acid two carbons shorter is formed. This is 3-ketoacyl-CoA thiolase from Shewanella baltica (strain OS155 / ATCC BAA-1091).